The primary structure comprises 96 residues: Large ribosomal subunit protein bL28 (96 aa).

A compositionally biased stretch (polar residues) spans Met1–Asn22. Positions Met1–Lys24 are disordered.

It belongs to the bacterial ribosomal protein bL28 family.

The polypeptide is Large ribosomal subunit protein bL28 (Rhizobium meliloti (strain 1021) (Ensifer meliloti)).